Reading from the N-terminus, the 273-residue chain is Nickel import ATP-binding protein NikE (273 aa).

The region spanning 13 to 252 (YRTGGLLRKR…AHPVGRQLQA (240 aa)) is the ABC transporter domain. 45–52 (GSSGSGKS) contributes to the ATP binding site.

Belongs to the ABC transporter superfamily. Nickel importer (TC 3.A.1.5.3) family. In terms of assembly, the complex is composed of two ATP-binding proteins (NikD and NikE), two transmembrane proteins (NikB and NikC) and a solute-binding protein (NikA).

Its subcellular location is the cell inner membrane. It carries out the reaction Ni(2+)(out) + ATP + H2O = Ni(2+)(in) + ADP + phosphate + H(+). Its function is as follows. Part of the ABC transporter complex NikABCDE involved in nickel import. Responsible for energy coupling to the transport system. This is Nickel import ATP-binding protein NikE from Pseudomonas putida (strain ATCC 47054 / DSM 6125 / CFBP 8728 / NCIMB 11950 / KT2440).